Reading from the N-terminus, the 1088-residue chain is DNA-directed RNA polymerase subunit beta (1088 aa).

The protein belongs to the RNA polymerase beta chain family. As to quaternary structure, in plastids the minimal PEP RNA polymerase catalytic core is composed of four subunits: alpha, beta, beta', and beta''. When a (nuclear-encoded) sigma factor is associated with the core the holoenzyme is formed, which can initiate transcription.

Its subcellular location is the plastid. It localises to the chloroplast. The catalysed reaction is RNA(n) + a ribonucleoside 5'-triphosphate = RNA(n+1) + diphosphate. Functionally, DNA-dependent RNA polymerase catalyzes the transcription of DNA into RNA using the four ribonucleoside triphosphates as substrates. This Ostreococcus tauri protein is DNA-directed RNA polymerase subunit beta.